A 734-amino-acid chain; its full sequence is NAD(P)H-quinone oxidoreductase subunit 5, chloroplastic (734 aa).

12 consecutive transmembrane segments (helical) span residues 9–29 (WIIPLLPLVSSITIGLGLFFF), 40–60 (YAIISTLLLSIAMFISFDLLW), 89–109 (IDPLTSIMLVLVTTIGVTVMI), 121–140 (YVRFFAYLSLSTASMLGLVI), 144–166 (LIQIYIFRELVGMCSYLLIGFWF), 185–205 (GDFGLLLGTSGFYWITGSFKF), 219–239 (HEVSLFLATPCALLFPLGPVA), 258–278 (TPISAPIHAATMVAAGIFLVA), 289–311 (LVMSSISWVGGVTASLGATVALA), 318–338 (VLAYSTMSQLGYMMLALGIGS), 395–415 (GTTFLLGTLSLCGIPPLACFW), and 425–445 (WLYFPILGWIARFTAGLTGFY). The interval 512–534 (DKNVKNSVSTQSSREEYSPHPKE) is disordered. The span at 524 to 534 (SREEYSPHPKE) shows a compositional bias: basic and acidic residues. 3 helical membrane passes run 539 to 559 (MLFPLLILTIPTLLVGFIGVP), 601 to 621 (VGTASLGIFTASILYGPIPFF), and 707 to 727 (ISYYLFGFISGTIILLLVVIN).

The protein belongs to the complex I subunit 5 family. In terms of assembly, NDH is composed of at least 16 different subunits, 5 of which are encoded in the nucleus.

The protein localises to the plastid. It is found in the chloroplast thylakoid membrane. The catalysed reaction is a plastoquinone + NADH + (n+1) H(+)(in) = a plastoquinol + NAD(+) + n H(+)(out). It carries out the reaction a plastoquinone + NADPH + (n+1) H(+)(in) = a plastoquinol + NADP(+) + n H(+)(out). Its function is as follows. NDH shuttles electrons from NAD(P)H:plastoquinone, via FMN and iron-sulfur (Fe-S) centers, to quinones in the photosynthetic chain and possibly in a chloroplast respiratory chain. The immediate electron acceptor for the enzyme in this species is believed to be plastoquinone. Couples the redox reaction to proton translocation, and thus conserves the redox energy in a proton gradient. The protein is NAD(P)H-quinone oxidoreductase subunit 5, chloroplastic (ndhF) of Huperzia lucidula (Shining clubmoss).